Here is a 349-residue protein sequence, read N- to C-terminus: Probable dual-specificity RNA methyltransferase RlmN (349 aa).

The active-site Proton acceptor is the Glu-94. In terms of domain architecture, Radical SAM core spans Tyr-100 to Arg-324. Cysteines 107 and 335 form a disulfide. 3 residues coordinate [4Fe-4S] cluster: Cys-114, Cys-118, and Cys-121. S-adenosyl-L-methionine-binding positions include Gly-161–Glu-162, Ser-193, Ser-216–His-218, and Asn-292. Catalysis depends on Cys-335, which acts as the S-methylcysteine intermediate.

This sequence belongs to the radical SAM superfamily. RlmN family. It depends on [4Fe-4S] cluster as a cofactor.

It localises to the cytoplasm. It catalyses the reaction adenosine(2503) in 23S rRNA + 2 reduced [2Fe-2S]-[ferredoxin] + 2 S-adenosyl-L-methionine = 2-methyladenosine(2503) in 23S rRNA + 5'-deoxyadenosine + L-methionine + 2 oxidized [2Fe-2S]-[ferredoxin] + S-adenosyl-L-homocysteine. The catalysed reaction is adenosine(37) in tRNA + 2 reduced [2Fe-2S]-[ferredoxin] + 2 S-adenosyl-L-methionine = 2-methyladenosine(37) in tRNA + 5'-deoxyadenosine + L-methionine + 2 oxidized [2Fe-2S]-[ferredoxin] + S-adenosyl-L-homocysteine. In terms of biological role, specifically methylates position 2 of adenine 2503 in 23S rRNA and position 2 of adenine 37 in tRNAs. The protein is Probable dual-specificity RNA methyltransferase RlmN of Finegoldia magna (strain ATCC 29328 / DSM 20472 / WAL 2508) (Peptostreptococcus magnus).